The primary structure comprises 30 residues: ATP-dependent Clp protease ATP-binding subunit ClpA homolog (30 aa).

The protein belongs to the ClpA/ClpB family.

The protein resides in the plastid. It is found in the chloroplast. In terms of biological role, may interact with a ClpP-like protease involved in degradation of denatured proteins in the chloroplast. The polypeptide is ATP-dependent Clp protease ATP-binding subunit ClpA homolog (Pinus pinaster (Maritime pine)).